Reading from the N-terminus, the 323-residue chain is Fructose-1,6-bisphosphatase class 1 (323 aa).

4 residues coordinate Mg(2+): Glu88, Asp107, Leu109, and Asp110. Residues 110-113 (DGSS) and Asn200 contribute to the substrate site. Glu272 is a binding site for Mg(2+).

This sequence belongs to the FBPase class 1 family. Homotetramer. Mg(2+) is required as a cofactor.

It localises to the cytoplasm. The enzyme catalyses beta-D-fructose 1,6-bisphosphate + H2O = beta-D-fructose 6-phosphate + phosphate. It participates in carbohydrate biosynthesis; gluconeogenesis. This Acinetobacter baumannii (strain AYE) protein is Fructose-1,6-bisphosphatase class 1.